A 344-amino-acid chain; its full sequence is Meiotic recombination protein DMC1 homolog B (344 aa).

ATP is bound at residue 133 to 140; that stretch reads GEFRSGKT. R235 provides a ligand contact to dsDNA. SsDNA is bound by residues R235, F238, R241, R247, and R315. Residues R241 and R247 each coordinate dsDNA.

This sequence belongs to the RecA family. DMC1 subfamily. As to expression, highly expressed in spikelets. Expressed in meiotic young panicles.

It is found in the nucleus. Its function is as follows. Recombinase that may participate in meiotic recombination, specifically in homologous strand assimilation, which is required for the resolution of meiotic double-strand breaks. Exhibits DNA-dependent ATPase activity when bound to single-stranded DNA (ssDNA). Mediates renaturation of homologous complementary strands as well as assimilation of single strands into homologous supercoiled duplexes leading to D-loop formation. Binds circular single-stranded DNA (ssDNA) and circular double-stranded DNA (dsDNA) in vitro. Catalyzes DNA homologous renaturation and DNA strand exchange. The rates of these activities are dependent on the state of ATP hydrolysis. Forms helical filaments along ssDNA and dsDNA, and promotes strand exchange between ssDNA and dsDNA with long DNA substrates of several thousand base pairs. The presence of the replication protein A is not required for this activity. Seems to be required for homologous pairing and subsequent chromosome segregation during male meiosis. May be not directly required for homologous pairing during male meiosis. Required for synaptonemal complex assembly and crossover formation. Functions redundantly with DMC1A. This is Meiotic recombination protein DMC1 homolog B from Oryza sativa subsp. japonica (Rice).